Consider the following 425-residue polypeptide: uncharacterized protein (425 aa).

The segment at K135–N202 adopts a CHY-type zinc-finger fold. 24 residues coordinate Zn(2+): C142, H144, C153, C156, C162, C165, H166, H172, C184, C187, C197, C200, C209, C212, H225, C226, C229, C232, H244, C245, C248, C251, H260, and C262. The CTCHY-type zinc-finger motif lies at M204–N270. The RING-type; atypical zinc-finger motif lies at C271–Y313.

This is an uncharacterized protein from Schizosaccharomyces pombe (strain 972 / ATCC 24843) (Fission yeast).